The following is a 466-amino-acid chain: MRMNKILLVFVFLSIATVINSGTTSNFVRTAQPSTEMSLETFPSPAGHNAPEQVHIVQGDYNGRGIIISWVTPLNLAGSNVVTYWKAVDGDVKPKKKRGHASTSSYRFYDYTSGFLHHATIKGLEYDTKYIYEVGTDGSVRQFSFTSPPKVGPDVPYTFGIIGDLGQTLASNETLYHYMSNPKGQAVLFPGDLSYADDHPNHDQRKWDSWGRFVEPCAAYQTFIYAAGNHEIDFVPNIGEPHAFKPYIHRYHNAYKASKSISPLWYSIRRASAHIIVLSSYSAYGKYTPQYVWLEQELKKVNREETPWLIVMVHSPWYNSNNYHYMEGESMRAMFESWFVNSKVDLVLSGHVHSYERSERVSNIKYNITNGLSYPVKDPSAPIYITIGDGGNIEGIANSFTDPQPSYSAYREASFGHAVLEIYNRTHAYYTWHRNQDNEPVAADSIMLHNRYFFPVEELESGNTRA.

Residues 1–21 (MRMNKILLVFVFLSIATVINS) form the signal peptide. D164 is a binding site for Fe cation. N-linked (GlcNAc...) asparagine glycosylation occurs at N172. Fe cation is bound by residues D192 and Y195. Residue D192 coordinates Zn(2+). Residues N229 and H314 each coordinate Zn(2+). Residue N229 coordinates substrate. Residue H324 is the Proton donor of the active site. Residue H351 participates in Zn(2+) binding. 351-353 (HVH) lines the substrate pocket. Residue H353 coordinates Fe cation. N-linked (GlcNAc...) asparagine glycans are attached at residues N367 and N424.

It belongs to the metallophosphoesterase superfamily. Purple acid phosphatase family. As to quaternary structure, homodimer. Requires Fe cation as cofactor. Zn(2+) serves as cofactor. As to expression, specifically expressed in flowers.

The protein resides in the secreted. The enzyme catalyses a phosphate monoester + H2O = an alcohol + phosphate. The sequence is that of Purple acid phosphatase 25 (PAP25) from Arabidopsis thaliana (Mouse-ear cress).